A 384-amino-acid polypeptide reads, in one-letter code: Putative odorant receptor 98b (384 aa).

Residues 1–34 are Cytoplasmic-facing; sequence MLTDKFLRLQSALFRLLGLELLHEQDVGHRYPWR. A helical transmembrane segment spans residues 35-55; sequence SICCILSVASFMPLTIAFGLQ. Topologically, residues 56–66 are extracellular; that stretch reads NVQNVEQLTDS. Residues 67 to 87 form a helical membrane-spanning segment; the sequence is LCSVLVDLLALCKIGLFLWLY. Residues 88–128 are Cytoplasmic-facing; the sequence is KDFKFLIGQFYCVLQTETHTAVAEMIVTRESRRDQFISAMY. A helical transmembrane segment spans residues 129 to 149; that stretch reads AYCFITAGLSACLMSPLSMLI. Residues 150-177 lie on the Extracellular side of the membrane; that stretch reads SYQRTGELQPKFPFPSVYPWDNMKLSNY. Residues 178 to 198 traverse the membrane as a helical segment; it reads IISYFWNVCAALGVALPTVCV. At 199-258 the chain is on the cytoplasmic side; the sequence is DTLFCSLSHNLCALFQIARHKMMHFEGRNTKETHENLKHVFQLYALCLNLGHFLNEYFRP. The helical transmembrane segment at 259 to 279 threads the bilayer; sequence LICQFVAASLHLCVLCYQLSA. The Extracellular portion of the chain corresponds to 280–284; the sequence is NILQP. Residues 285–305 traverse the membrane as a helical segment; sequence ALLFYAAFTAAVVGQVSIYCF. Residues 306–329 lie on the Cytoplasmic side of the membrane; the sequence is CGSSIHSECQLFGQAIYESSWPHL. Residues 330-350 traverse the membrane as a helical segment; the sequence is LQENLQLVSSLKIAMMRSSLG. The Extracellular segment spans residues 351–384; that stretch reads CPIDGYFFEANRETLITVSKAFIKVSKKTPQVND.

This sequence belongs to the insect chemoreceptor superfamily. Heteromeric odorant receptor channel (TC 1.A.69) family. Or1a subfamily. Interacts with Orco. Complexes exist early in the endomembrane system in olfactory sensory neurons (OSNs), coupling these complexes to the conserved ciliary trafficking pathway.

It is found in the cell membrane. Functionally, odorant receptor which mediates acceptance or avoidance behavior, depending on its substrates. The odorant receptor repertoire encodes a large collection of odor stimuli that vary widely in identity, intensity, and duration. May form a complex with Orco to form odorant-sensing units, providing sensitive and prolonged odorant signaling and calcium permeability. This Drosophila melanogaster (Fruit fly) protein is Putative odorant receptor 98b (Or98b).